The chain runs to 215 residues: Ribonuclease T (215 aa).

The Exonuclease domain maps to 20-194 (VVIDVETAGF…YDTERTAVLF (175 aa)). Mg(2+)-binding residues include Asp23, Glu25, His181, and Asp186. The Proton donor/acceptor role is filled by His181.

It belongs to the RNase T family. In terms of assembly, homodimer. Mg(2+) serves as cofactor.

Functionally, trims short 3' overhangs of a variety of RNA species, leaving a one or two nucleotide 3' overhang. Responsible for the end-turnover of tRNA: specifically removes the terminal AMP residue from uncharged tRNA (tRNA-C-C-A). Also appears to be involved in tRNA biosynthesis. This is Ribonuclease T from Salmonella choleraesuis (strain SC-B67).